The chain runs to 311 residues: Bifunctional protein FolD (311 aa).

174–176 (GKG) lines the NADP(+) pocket.

This sequence belongs to the tetrahydrofolate dehydrogenase/cyclohydrolase family. As to quaternary structure, homodimer.

The catalysed reaction is (6R)-5,10-methylene-5,6,7,8-tetrahydrofolate + NADP(+) = (6R)-5,10-methenyltetrahydrofolate + NADPH. It carries out the reaction (6R)-5,10-methenyltetrahydrofolate + H2O = (6R)-10-formyltetrahydrofolate + H(+). The protein operates within one-carbon metabolism; tetrahydrofolate interconversion. In terms of biological role, catalyzes the oxidation of 5,10-methylenetetrahydrofolate to 5,10-methenyltetrahydrofolate and then the hydrolysis of 5,10-methenyltetrahydrofolate to 10-formyltetrahydrofolate. The sequence is that of Bifunctional protein FolD from Pyrobaculum aerophilum (strain ATCC 51768 / DSM 7523 / JCM 9630 / CIP 104966 / NBRC 100827 / IM2).